The primary structure comprises 640 residues: 1-deoxy-D-xylulose-5-phosphate synthase (640 aa).

Thiamine diphosphate-binding positions include His-72 and 113-115 (GHA). Residue Asp-144 participates in Mg(2+) binding. Thiamine diphosphate contacts are provided by residues 145–146 (GA), Asn-174, Tyr-287, and Glu-370. Asn-174 lines the Mg(2+) pocket.

This sequence belongs to the transketolase family. DXPS subfamily. As to quaternary structure, homodimer. Mg(2+) serves as cofactor. Thiamine diphosphate is required as a cofactor.

The enzyme catalyses D-glyceraldehyde 3-phosphate + pyruvate + H(+) = 1-deoxy-D-xylulose 5-phosphate + CO2. It functions in the pathway metabolic intermediate biosynthesis; 1-deoxy-D-xylulose 5-phosphate biosynthesis; 1-deoxy-D-xylulose 5-phosphate from D-glyceraldehyde 3-phosphate and pyruvate: step 1/1. Functionally, catalyzes the acyloin condensation reaction between C atoms 2 and 3 of pyruvate and glyceraldehyde 3-phosphate to yield 1-deoxy-D-xylulose-5-phosphate (DXP). The chain is 1-deoxy-D-xylulose-5-phosphate synthase from Synechococcus sp. (strain RCC307).